A 581-amino-acid polypeptide reads, in one-letter code: Probable peptidoglycan D,D-transpeptidase PenA (581 aa).

The helical transmembrane segment at 28 to 48 (ISFVLMAMAVLFACLIARGLY) threads the bilayer. Ser-310 acts as the Acyl-ester intermediate in catalysis.

This sequence belongs to the transpeptidase family. FtsI subfamily.

It is found in the cell inner membrane. It carries out the reaction Preferential cleavage: (Ac)2-L-Lys-D-Ala-|-D-Ala. Also transpeptidation of peptidyl-alanyl moieties that are N-acyl substituents of D-alanine.. It functions in the pathway cell wall biogenesis; peptidoglycan biosynthesis. Functionally, catalyzes cross-linking of the peptidoglycan cell wall at the division septum. The sequence is that of Probable peptidoglycan D,D-transpeptidase PenA from Neisseria gonorrhoeae.